The chain runs to 453 residues: Bifunctional protein GlmU (453 aa).

The segment at methionine 1–arginine 226 is pyrophosphorylase. UDP-N-acetyl-alpha-D-glucosamine contacts are provided by residues leucine 7–glycine 10, lysine 21, glutamine 73, and glycine 78–threonine 79. Aspartate 103 is a binding site for Mg(2+). The UDP-N-acetyl-alpha-D-glucosamine site is built by glycine 140, glutamate 155, asparagine 170, and asparagine 224. Asparagine 224 contacts Mg(2+). The linker stretch occupies residues alanine 227–lysine 247. Residues glycine 248–glutamine 453 are N-acetyltransferase. UDP-N-acetyl-alpha-D-glucosamine is bound by residues arginine 329 and lysine 347. Histidine 359 functions as the Proton acceptor in the catalytic mechanism. The UDP-N-acetyl-alpha-D-glucosamine site is built by tyrosine 362 and asparagine 373. Alanine 376, alanine 419, and arginine 436 together coordinate acetyl-CoA.

The protein in the N-terminal section; belongs to the N-acetylglucosamine-1-phosphate uridyltransferase family. In the C-terminal section; belongs to the transferase hexapeptide repeat family. As to quaternary structure, homotrimer. Mg(2+) serves as cofactor.

It is found in the cytoplasm. The catalysed reaction is alpha-D-glucosamine 1-phosphate + acetyl-CoA = N-acetyl-alpha-D-glucosamine 1-phosphate + CoA + H(+). It catalyses the reaction N-acetyl-alpha-D-glucosamine 1-phosphate + UTP + H(+) = UDP-N-acetyl-alpha-D-glucosamine + diphosphate. It functions in the pathway nucleotide-sugar biosynthesis; UDP-N-acetyl-alpha-D-glucosamine biosynthesis; N-acetyl-alpha-D-glucosamine 1-phosphate from alpha-D-glucosamine 6-phosphate (route II): step 2/2. It participates in nucleotide-sugar biosynthesis; UDP-N-acetyl-alpha-D-glucosamine biosynthesis; UDP-N-acetyl-alpha-D-glucosamine from N-acetyl-alpha-D-glucosamine 1-phosphate: step 1/1. Its pathway is bacterial outer membrane biogenesis; LPS lipid A biosynthesis. Functionally, catalyzes the last two sequential reactions in the de novo biosynthetic pathway for UDP-N-acetylglucosamine (UDP-GlcNAc). The C-terminal domain catalyzes the transfer of acetyl group from acetyl coenzyme A to glucosamine-1-phosphate (GlcN-1-P) to produce N-acetylglucosamine-1-phosphate (GlcNAc-1-P), which is converted into UDP-GlcNAc by the transfer of uridine 5-monophosphate (from uridine 5-triphosphate), a reaction catalyzed by the N-terminal domain. This Prochlorococcus marinus (strain MIT 9211) protein is Bifunctional protein GlmU.